The primary structure comprises 270 residues: Endonuclease 4 (270 aa).

Zn(2+)-binding residues include H69, H108, E139, D169, H172, H204, D217, H219, and E248.

This sequence belongs to the AP endonuclease 2 family. Requires Zn(2+) as cofactor.

It catalyses the reaction Endonucleolytic cleavage to 5'-phosphooligonucleotide end-products.. Functionally, endonuclease IV plays a role in DNA repair. It cleaves phosphodiester bonds at apurinic or apyrimidinic (AP) sites, generating a 3'-hydroxyl group and a 5'-terminal sugar phosphate. In addition, possesses a 3'-5' exonuclease activity. This Thermus thermophilus (strain ATCC BAA-163 / DSM 7039 / HB27) protein is Endonuclease 4.